The chain runs to 35 residues: Phosphoribulokinase (35 aa).

It belongs to the phosphoribulokinase family.

It is found in the plastid. The protein localises to the chloroplast. It carries out the reaction D-ribulose 5-phosphate + ATP = D-ribulose 1,5-bisphosphate + ADP + H(+). It functions in the pathway carbohydrate biosynthesis; Calvin cycle. Light regulated via thioredoxin by reversible oxidation/reduction of sulfhydryl/disulfide groups. The protein is Phosphoribulokinase of Pinus pinaster (Maritime pine).